The primary structure comprises 602 residues: MKIHELPQEVILKIAAGEVVTGCFSVVKELVENALDAEATTVEVEIKAGGKEYIRVSDNGIGMLPEELKMAIKPHTTSKIQCIEDLERILTYGFRGEALSTISSVSRMRISSMPDNADLGLTIEISGGKIVREKSYIGPKGTTVEVYDLLFNTPARRKFLKSQRVEGRMVTEIVQRFILAIPDAGFKYIRDGELIYDLTPAERILERIPVVFPELSTTDLLEVKEETSGISITGYITFPERTRFNRLGEMVFVNGRYVRQPELNYAIEKGYGESLEKGRFPFAILFISVNPEMIDVNIHPQKLEVRFSNPSLVFDAIKRAVRNTLRTSGTSILRIEKRPFPGSSTNYSGIQQDTKKQESDNPEKARGYGTHLRETHWEQRDHFEKRKVPLHYQPDNELLLNIERTASRRFEKTEAKETGEPRLFGVFGERYILAETKDGLLIVDQHAAHERLIYEKLKKAAKIQSQKLLSPIRLTLEDSRKSLLREKKNDVEKLGFQISFEGDRIFLTGIPSILSESVAVNALNEVLDELRLEGLEEPEKIFDHLLSTLACKSAIKTGDRLSESEAKELLEKLLEEEILFCPHGRPVSMLIRFKDLDRHFSR.

Residues 337-367 are disordered; the sequence is KRPFPGSSTNYSGIQQDTKKQESDNPEKARG. Over residues 342–352 the composition is skewed to polar residues; that stretch reads GSSTNYSGIQQ. A compositionally biased stretch (basic and acidic residues) spans 353–367; it reads DTKKQESDNPEKARG.

Belongs to the DNA mismatch repair MutL/HexB family.

In terms of biological role, this protein is involved in the repair of mismatches in DNA. It is required for dam-dependent methyl-directed DNA mismatch repair. May act as a 'molecular matchmaker', a protein that promotes the formation of a stable complex between two or more DNA-binding proteins in an ATP-dependent manner without itself being part of a final effector complex. The polypeptide is DNA mismatch repair protein MutL (Kosmotoga olearia (strain ATCC BAA-1733 / DSM 21960 / TBF 19.5.1)).